A 442-amino-acid chain; its full sequence is Glutamate-1-semialdehyde 2,1-aminomutase (442 aa).

Lys-282 bears the N6-(pyridoxal phosphate)lysine mark.

This sequence belongs to the class-III pyridoxal-phosphate-dependent aminotransferase family. HemL subfamily. In terms of assembly, homodimer. Requires pyridoxal 5'-phosphate as cofactor.

It is found in the cytoplasm. It catalyses the reaction (S)-4-amino-5-oxopentanoate = 5-aminolevulinate. It participates in porphyrin-containing compound metabolism; protoporphyrin-IX biosynthesis; 5-aminolevulinate from L-glutamyl-tRNA(Glu): step 2/2. This is Glutamate-1-semialdehyde 2,1-aminomutase from Polaromonas sp. (strain JS666 / ATCC BAA-500).